The primary structure comprises 132 residues: Small ribosomal subunit protein uS8 (132 aa).

The protein belongs to the universal ribosomal protein uS8 family. Part of the 30S ribosomal subunit. Contacts proteins S5 and S12.

Its function is as follows. One of the primary rRNA binding proteins, it binds directly to 16S rRNA central domain where it helps coordinate assembly of the platform of the 30S subunit. The chain is Small ribosomal subunit protein uS8 from Psychrobacter sp. (strain PRwf-1).